The chain runs to 1528 residues: 5'-3' exoribonuclease 1 (1528 aa).

Disordered stretches follow at residues 1246–1331 (SKKA…KSSE), 1431–1455 (PPPAPHGFGQPISFPPPPPMTNVSD), and 1470–1528 (LKKF…DEST). The span at 1274–1304 (QSEEKLRKERAHDLLNFIKKDTNEKNSESVD) shows a compositional bias: basic and acidic residues. Over residues 1317 to 1326 (AKKVLLKRPA) the composition is skewed to basic residues. Residues 1500–1517 (SSGTNSTECQSPKSQSNA) are compositionally biased toward polar residues. Thr1506 is modified (phosphothreonine). Ser1510 is subject to Phosphoserine. Residues 1518–1528 (ADRDNKKDEST) are compositionally biased toward basic and acidic residues.

The protein belongs to the 5'-3' exonuclease family. Mg(2+) is required as a cofactor.

It localises to the cytoplasm. The protein localises to the perinuclear region. Its subcellular location is the P-body. With respect to regulation, 3'-phosphoadenosine 5'-phosphate (pAp) is an inhibitor of KEM1. Sodium-induced GCN4 expression reduces pAp accumulation by activating HAL2 expression, and therefore maintains mRNA degradation capacity which is likely to be important for the accurate and rapid adaptation of gene expression to salt stress. Multifunctional protein that exhibits several independent functions at different levels of the cellular processes. 5'-3' exonuclease component of the nonsense-mediated mRNA decay (NMD) which is a highly conserved mRNA degradation pathway, an RNA surveillance system whose role is to identify and rid cells of mRNA with premature termination codons and thus prevents accumulation of potentially harmful truncated proteins. The NMD pathway has a second role regulating the decay of wild-type mRNAs, and especially mRNAs that are important for telomere functions. Participate in CTH2-mediated and VTS1-mediated mRNA turnover. Involved in the degradation of several hypomodified mature tRNA species and participates in the 5'-processing or the degradation of the snoRNA precursors and rRNA processing. Involved in defense against virus and suppresses viral RNA recombination by rapidly removing the 5'-truncated RNAs, the substrates of recombination, and thus reducing the chance for recombination to occur in the parental strain. Required for the assembly of the virus-like particles of the Ty3 retrotransposon and contributes to the efficient generation of narnavirus 20S RNA by playing a major role in the elimination of the non-viral upstream sequences from the primary transcripts. Degrades single-stranded DNA (ss-DNA) and can renature complementary ss-DNA as well as catalyzes the formation of heteroduplex DNA from circular ss-DNA and homologous linear ds-DNA in vitro. Acts as a microtubule-associated protein which interacts with cytoplasmic microtubules through beta-tubulin and promotes in vitro assembly of tubulin into microtubules. Associates with microtubule functions such as chromosome transmission, nuclear migration, and SPB duplication. Has also a role in G1 to S transition and is involved in nuclear fusion during karyogamy. Required for the expression of ROK1 at the post-transcriptional level and for the alpha-factor induction of the karyogamy genes KAR3 and KAR4. Plays a role in filamentous growth. In Saccharomyces cerevisiae (strain ATCC 204508 / S288c) (Baker's yeast), this protein is 5'-3' exoribonuclease 1 (XRN1).